A 380-amino-acid polypeptide reads, in one-letter code: Calreticulin-3 (380 aa).

The signal sequence occupies residues 1-19 (MVSARALLWAICVLRVALA). Positions 20–197 (TVYFQEEFLD…GQSIESGSIE (178 aa)) are N-domain. Asparagine 42 carries an N-linked (GlcNAc...) asparagine glycan. The an alpha-D-glucoside site is built by tyrosine 109, lysine 111, tyrosine 128, and aspartate 135. Residues cysteine 137 and cysteine 163 are joined by a disulfide bond. 7 tandem repeats follow at residues 191–202 (IESGSIEYDWNL), 209–220 (EKTSLDSRDWDQ), 222–231 (EGSKVQDWEK), 235–246 (DAGASKPSDWNS), 250–256 (GDWLQKP), 260–268 (DGLKAEGID), and 270–280 (DVWLHQKMRPA). The 4 X approximate repeats stretch occupies residues 191–246 (IESGSIEYDWNLTSLRKTEKTSLDSRDWDQVEGSKVQDWEKHFLDAGASKPSDWNS). The P-domain stretch occupies residues 198-291 (YDWNLTSLRK…YLTQYDLSEF (94 aa)). A glycan (N-linked (GlcNAc...) asparagine) is linked at asparagine 201. Residues 250 to 280 (GDWLQKPPYEDGLKAEGIDKDVWLHQKMRPA) form a 3 X approximate repeats region. Residues 292–380 (ENIGAIGLEL…FSRFHRQGEL (89 aa)) are C-domain. Glutamate 300 is a binding site for an alpha-D-glucoside. The Prevents secretion from ER motif lies at 377 to 380 (QGEL).

It belongs to the calreticulin family. In terms of assembly, component of an EIF2 complex at least composed of CELF1/CUGBP1, CALR, CALR3, EIF2S1, EIF2S2, HSP90B1 and HSPA5. Testis specific, absent in mature sperm.

The protein resides in the endoplasmic reticulum lumen. In terms of biological role, CALR3 capacity for calcium-binding may be absent or much lower than that of CALR. During spermatogenesis, may act as a lectin-independent chaperone for specific client proteins such as ADAM3. Required for sperm fertility. The sequence is that of Calreticulin-3 (Calr3) from Mus musculus (Mouse).